The primary structure comprises 275 residues: Rhamnulose-1-phosphate aldolase (275 aa).

E117 is an active-site residue. Zn(2+)-binding residues include H141, H143, and H212.

The protein belongs to the aldolase class II family. RhaD subfamily. In terms of assembly, homotetramer. Requires Zn(2+) as cofactor.

The protein resides in the cytoplasm. The enzyme catalyses L-rhamnulose 1-phosphate = (S)-lactaldehyde + dihydroxyacetone phosphate. It participates in carbohydrate degradation; L-rhamnose degradation; glycerone phosphate from L-rhamnose: step 3/3. Its function is as follows. Catalyzes the reversible cleavage of L-rhamnulose-1-phosphate to dihydroxyacetone phosphate (DHAP) and L-lactaldehyde. This Salmonella paratyphi C (strain RKS4594) protein is Rhamnulose-1-phosphate aldolase.